The primary structure comprises 262 residues: Eukaryotic translation initiation factor 3 subunit G (262 aa).

The RRM domain occupies 182 to 260 (NTCRVTNLPQ…MVLKVEWTRP (79 aa)).

The protein belongs to the eIF-3 subunit G family. As to quaternary structure, component of the eukaryotic translation initiation factor 3 (eIF-3) complex.

The protein localises to the cytoplasm. Functionally, RNA-binding component of the eukaryotic translation initiation factor 3 (eIF-3) complex, which is involved in protein synthesis of a specialized repertoire of mRNAs and, together with other initiation factors, stimulates binding of mRNA and methionyl-tRNAi to the 40S ribosome. The eIF-3 complex specifically targets and initiates translation of a subset of mRNAs involved in cell proliferation. This subunit can bind 18S rRNA. Binds to GC-rich 5'UTRs in cholinergic motor neurons, thereby may play a role in translational regulation of mRNAs involved in neuropeptide signaling and stress response, including hlh-30 isoform d and ncs-2. This Caenorhabditis elegans protein is Eukaryotic translation initiation factor 3 subunit G.